A 104-amino-acid chain; its full sequence is Putative pterin-4-alpha-carbinolamine dehydratase (104 aa).

Belongs to the pterin-4-alpha-carbinolamine dehydratase family.

The catalysed reaction is (4aS,6R)-4a-hydroxy-L-erythro-5,6,7,8-tetrahydrobiopterin = (6R)-L-erythro-6,7-dihydrobiopterin + H2O. The protein is Putative pterin-4-alpha-carbinolamine dehydratase (pcbD) of Rhizobium meliloti (strain 1021) (Ensifer meliloti).